A 158-amino-acid chain; its full sequence is Large ribosomal subunit protein uL15 (158 aa).

The span at 1-13 (MKLNEIKDNEGST) shows a compositional bias: basic and acidic residues. Residues 1–44 (MKLNEIKDNEGSTHSRKRLGRGIGSGSGKTAGRGVKGQKSRSGV) are disordered. Over residues 21–35 (RGIGSGSGKTAGRGV) the composition is skewed to gly residues.

It belongs to the universal ribosomal protein uL15 family. Part of the 50S ribosomal subunit.

Binds to the 23S rRNA. This is Large ribosomal subunit protein uL15 from Rhizobium etli (strain ATCC 51251 / DSM 11541 / JCM 21823 / NBRC 15573 / CFN 42).